The primary structure comprises 1488 residues: Eukaryotic translation initiation factor 4G (1488 aa).

Disordered stretches follow at residues 196-320 (VQHR…GQTS), 337-367 (DSEK…GKSE), and 415-707 (THQI…MTEA). Basic and acidic residues-rich tracts occupy residues 216–244 (VSEK…EKHP) and 274–299 (ADEK…RNDT). Polar residues-rich tracts occupy residues 300 to 310 (KNLPQQPQSAS), 345 to 360 (SKVS…SSIS), 448 to 464 (SLAT…SFVT), and 473 to 495 (CTTS…TQTL). Positions 496–520 (SASVDASDVSEVNSGTSSESTSQST) are enriched in low complexity. The segment covering 555 to 566 (QVKHADGAKDES) has biased composition (basic and acidic residues). Polar residues predominate over residues 627-646 (QEQSESVATSDGADSSSTVD). Over residues 651-671 (LPEESEREVMCEDDGKKKVEP) the composition is skewed to basic and acidic residues. Over residues 683–696 (PKLQSSDSGNQASA) the composition is skewed to polar residues. The interval 709-721 (GRKKYSRDFLLTF) is EIF4E-binding. A compositionally biased stretch (basic and acidic residues) spans 753–784 (DREPHPSSARGSDRPTSRGDRRGPAMDDDKWL). Disordered regions lie at residues 753–795 (DREP…PNRD), 974–1000 (RGER…EREE), and 1107–1299 (WQQR…SEEE). Positions 883–1106 (QRQLKAILNK…RDSIDLRKNK (224 aa)) constitute an MIF4G domain. Over residues 978–989 (EEAEADKTEEEG) the composition is skewed to acidic residues. Basic and acidic residues-rich tracts occupy residues 990–1000 (EIKQTKEEREE), 1111–1132 (RKVD…ERHA), 1181–1191 (IRYEQERHQFD), and 1254–1267 (TRED…DRFS). Over residues 1273–1294 (AAQSASSSHRPASQEGRSGNKS) the composition is skewed to polar residues. Residues 1299–1423 (ELREKSIATI…VLQDVGKLIE (125 aa)) form the MI domain.

Belongs to the eukaryotic initiation factor 4G family. As to quaternary structure, EIF4F is a multi-subunit complex, the composition of which varies with external and internal environmental conditions. It is composed of at least EIF4A, EIF4E and EIF4G. In higher plants two isoforms of EIF4F have been identified, named isoform EIF4F and isoform EIF(iso)4F. Isoform EIF4F has subunits p220 and p26, whereas isoform EIF(iso)4F has subunits p82 and p28.

Functionally, component of the protein complex eIF4F, which is involved in the recognition of the mRNA cap, ATP-dependent unwinding of 5'-terminal secondary structure and recruitment of mRNA to the ribosome. This Triticum aestivum (Wheat) protein is Eukaryotic translation initiation factor 4G.